A 286-amino-acid chain; its full sequence is uncharacterized protein (286 aa).

Disordered regions lie at residues 1–38 (MSQK…EDDV), 108–146 (HTGE…RRHK), 196–227 (RTQK…KTRL), and 241–286 (DVDD…PRSS). The span at 18-29 (SSSKQVLSSTSS) shows a compositional bias: low complexity. Over residues 243 to 268 (DDQKKDGSGEEKKEKKSAEKEKKISH) the composition is skewed to basic and acidic residues. Residues 269–278 (ENVQSLSPSS) show a composition bias toward polar residues.

This is an uncharacterized protein from Caenorhabditis elegans.